The sequence spans 149 residues: uncharacterized protein (149 aa).

Helical transmembrane passes span 39–61 (VPLG…LIIG), 82–104 (VFGY…GAIL), and 119–141 (WMMM…SIYL).

The protein to M.pneumoniae MPN_090.

The protein resides in the cell membrane. This is an uncharacterized protein from Mycoplasma pneumoniae (strain ATCC 29342 / M129 / Subtype 1) (Mycoplasmoides pneumoniae).